We begin with the raw amino-acid sequence, 205 residues long: Glutathione peroxidase 1 (205 aa).

Ser37 bears the Phosphoserine mark. Residue Sec52 is part of the active site. Residue Sec52 is a non-standard amino acid, selenocysteine. Residues Lys91 and Lys117 each carry the N6-acetyllysine; alternate modification. 2 positions are modified to N6-succinyllysine; alternate: Lys91 and Lys117. Lys117 carries an N-linked (Glc) (glycation) lysine; in vitro glycan. At Lys124 the chain carries N6-acetyllysine. Lys151 carries the post-translational modification N6-acetyllysine; alternate. Lys151 carries the post-translational modification N6-succinyllysine; alternate. Phosphoserine is present on residues Ser200 and Ser204.

Belongs to the glutathione peroxidase family. Homotetramer. Interacts with MIEN1. Post-translationally, during periods of oxidative stress, Sec-52 may react with a superoxide radical, irreversibly lose hydroselenide and be converted to dehydroalanine.

The protein resides in the cytoplasm. Its subcellular location is the mitochondrion. The enzyme catalyses 2 glutathione + H2O2 = glutathione disulfide + 2 H2O. It catalyses the reaction a hydroperoxy polyunsaturated fatty acid + 2 glutathione = a hydroxy polyunsaturated fatty acid + glutathione disulfide + H2O. It carries out the reaction tert-butyl hydroperoxide + 2 glutathione = tert-butanol + glutathione disulfide + H2O. The catalysed reaction is cumene hydroperoxide + 2 glutathione = 2-phenylpropan-2-ol + glutathione disulfide + H2O. The enzyme catalyses (13S)-hydroperoxy-(9Z,11E)-octadecadienoate + 2 glutathione = (13S)-hydroxy-(9Z,11E)-octadecadienoate + glutathione disulfide + H2O. It catalyses the reaction (9S)-hydroperoxy-(10E,12Z)-octadecadienoate + 2 glutathione = (9S)-hydroxy-(10E,12Z)-octadecadienoate + glutathione disulfide + H2O. It carries out the reaction (5S)-hydroperoxy-(6E,8Z,11Z,14Z)-eicosatetraenoate + 2 glutathione = (5S)-hydroxy-(6E,8Z,11Z,14Z)-eicosatetraenoate + glutathione disulfide + H2O. The catalysed reaction is (12S)-hydroperoxy-(5Z,8Z,10E,14Z)-eicosatetraenoate + 2 glutathione = (12S)-hydroxy-(5Z,8Z,10E,14Z)-eicosatetraenoate + glutathione disulfide + H2O. The enzyme catalyses (12R)-hydroperoxy-(5Z,8Z,10E,14Z)-eicosatetraenoate + 2 glutathione = (12R)-hydroxy-(5Z,8Z,10E,14Z)-eicosatetraenoate + glutathione disulfide + H2O. It catalyses the reaction (15S)-hydroperoxy-(5Z,8Z,11Z,13E)-eicosatetraenoate + 2 glutathione = (15S)-hydroxy-(5Z,8Z,11Z,13E)-eicosatetraenoate + glutathione disulfide + H2O. It carries out the reaction (5S)-hydroperoxy-(6E,8Z,11Z,14Z,17Z)-eicosapentaenoate + 2 glutathione = (5S)-hydroxy-(6E,8Z,11Z,14Z,17Z)-eicosapentaenoate + glutathione disulfide + H2O. The catalysed reaction is (15S)-hydroperoxy-(5Z,8Z,11Z,13E,17Z)-eicosapentaenoate + 2 glutathione = (15S)-hydroxy-(5Z,8Z,11Z,13E,17Z)-eicosapentaenoate + glutathione disulfide + H2O. The enzyme catalyses (15S)-hydroperoxy-(11Z,13E)-eicosadienoate + 2 glutathione = (15S)-hydroxy-(11Z,13E)-eicosadienoate + glutathione disulfide + H2O. It catalyses the reaction (17S)-hydroperoxy-(4Z,7Z,10Z,13Z,15E,19Z)-docosahexaenoate + 2 glutathione = (17S)-hydroxy-(4Z,7Z,10Z,13Z,15E,19Z)-docosahexaenoate + glutathione disulfide + H2O. Functionally, catalyzes the reduction of hydroperoxides in a glutathione-dependent manner thus regulating cellular redox homeostasis. Can reduce small soluble hydroperoxides such as H2O2, cumene hydroperoxide and tert-butyl hydroperoxide, as well as several fatty acid-derived hydroperoxides. In platelets catalyzes the reduction of 12-hydroperoxyeicosatetraenoic acid, the primary product of the arachidonate 12-lipoxygenase pathway. In Bos taurus (Bovine), this protein is Glutathione peroxidase 1 (GPX1).